The chain runs to 94 residues: Pyrimidine/purine nucleoside phosphorylase (94 aa).

The protein belongs to the nucleoside phosphorylase PpnP family.

It carries out the reaction a purine D-ribonucleoside + phosphate = a purine nucleobase + alpha-D-ribose 1-phosphate. The enzyme catalyses adenosine + phosphate = alpha-D-ribose 1-phosphate + adenine. The catalysed reaction is cytidine + phosphate = cytosine + alpha-D-ribose 1-phosphate. It catalyses the reaction guanosine + phosphate = alpha-D-ribose 1-phosphate + guanine. It carries out the reaction inosine + phosphate = alpha-D-ribose 1-phosphate + hypoxanthine. The enzyme catalyses thymidine + phosphate = 2-deoxy-alpha-D-ribose 1-phosphate + thymine. The catalysed reaction is uridine + phosphate = alpha-D-ribose 1-phosphate + uracil. It catalyses the reaction xanthosine + phosphate = alpha-D-ribose 1-phosphate + xanthine. Catalyzes the phosphorolysis of diverse nucleosides, yielding D-ribose 1-phosphate and the respective free bases. Can use uridine, adenosine, guanosine, cytidine, thymidine, inosine and xanthosine as substrates. Also catalyzes the reverse reactions. The chain is Pyrimidine/purine nucleoside phosphorylase from Klebsiella pneumoniae (strain 342).